Here is a 429-residue protein sequence, read N- to C-terminus: Phosphoribosylamine--glycine ligase (429 aa).

In terms of domain architecture, ATP-grasp spans 109–316 (KDFLARHKIP…LVELCLAACE (208 aa)). 135–196 (LREKGAPIVI…EEFLDGEEAS (62 aa)) is a binding site for ATP. Residues 212-236 (SQDHKRVGDKDTGPNTGGMGAYSPA) are disordered. The span at 213 to 223 (QDHKRVGDKDT) shows a compositional bias: basic and acidic residues. Mg(2+)-binding residues include E286 and N288.

Belongs to the GARS family. As to quaternary structure, monomer. Mg(2+) is required as a cofactor. It depends on Mn(2+) as a cofactor.

It carries out the reaction 5-phospho-beta-D-ribosylamine + glycine + ATP = N(1)-(5-phospho-beta-D-ribosyl)glycinamide + ADP + phosphate + H(+). It functions in the pathway purine metabolism; IMP biosynthesis via de novo pathway; N(1)-(5-phospho-D-ribosyl)glycinamide from 5-phospho-alpha-D-ribose 1-diphosphate: step 2/2. Functionally, catalyzes the reversible conversion of phosphoribosylamine to glycinamide ribonucleotide, an enzymatic step in purine biosynthesis pathway. This chain is Phosphoribosylamine--glycine ligase (purD), found in Escherichia coli (strain K12).